The following is a 187-amino-acid chain: MLPGLEAAELPADAIEVGRIADAWGIKGWFKVLPYSADPEALFSARRWFLLPAEKGAKTFSGVAQLAIKEAKVHSDTVVASAQAVDDRTAAEALRGARIFVARSSFPSAEKDEYYWVDLIGLNVVNREGVAMGTVKELLSTGAQTVLVLEYSQDGKAQERMIPFVSVYIDEVDLPGHRILVDWQADF.

One can recognise a PRC barrel domain in the interval 111-187 (KDEYYWVDLI…RILVDWQADF (77 aa)).

The protein belongs to the RimM family. Binds ribosomal protein uS19.

It is found in the cytoplasm. In terms of biological role, an accessory protein needed during the final step in the assembly of 30S ribosomal subunit, possibly for assembly of the head region. Essential for efficient processing of 16S rRNA. May be needed both before and after RbfA during the maturation of 16S rRNA. It has affinity for free ribosomal 30S subunits but not for 70S ribosomes. The sequence is that of Ribosome maturation factor RimM from Albidiferax ferrireducens (strain ATCC BAA-621 / DSM 15236 / T118) (Rhodoferax ferrireducens).